We begin with the raw amino-acid sequence, 643 residues long: Ecto-NOX disulfide-thiol exchanger 1 (643 aa).

The RRM domain maps to 142 to 221 (KTVFVGGLPE…GRLHVDFAQA (80 aa)). 2 coiled-coil regions span residues 307-342 (VQSANSHVRRLMNEKATHEQEMEEAKENFKNALTGI) and 425-521 (QAYA…QLKG).

It belongs to the ENOX family. Cu cation is required as a cofactor.

It localises to the cell membrane. It is found in the secreted. Its subcellular location is the extracellular space. With respect to regulation, not inhibited by the antitumor sulfonylurea LY181984, the vabilloid capsaicin, and retinoids. Probably acts as a terminal oxidase of plasma electron transport from cytosolic NAD(P)H via hydroquinones to acceptors at the cell surface. Hydroquinone oxidase activity alternates with a protein disulfide-thiol interchange/oxidoreductase activity which may control physical membrane displacements associated with vesicle budding or cell enlargement. The activities oscillate with a period length of 24 minutes and play a role in control of the ultradian cellular biological clock. In Mus musculus (Mouse), this protein is Ecto-NOX disulfide-thiol exchanger 1 (Enox1).